A 381-amino-acid chain; its full sequence is Queuine tRNA-ribosyltransferase (381 aa).

Asp-92 serves as the catalytic Proton acceptor. Residues 92–96, Asp-146, Gln-190, and Gly-217 each bind substrate; that span reads DSGGF. Residues 248–254 are RNA binding; that stretch reads GVGRPED. The active-site Nucleophile is the Asp-267. Residues 272-276 are RNA binding; important for wobble base 34 recognition; it reads TRNAR. Residues Cys-305, Cys-307, Cys-310, and His-337 each contribute to the Zn(2+) site.

It belongs to the queuine tRNA-ribosyltransferase family. In terms of assembly, homodimer. Within each dimer, one monomer is responsible for RNA recognition and catalysis, while the other monomer binds to the replacement base PreQ1. Zn(2+) is required as a cofactor.

The catalysed reaction is 7-aminomethyl-7-carbaguanine + guanosine(34) in tRNA = 7-aminomethyl-7-carbaguanosine(34) in tRNA + guanine. It functions in the pathway tRNA modification; tRNA-queuosine biosynthesis. Functionally, catalyzes the base-exchange of a guanine (G) residue with the queuine precursor 7-aminomethyl-7-deazaguanine (PreQ1) at position 34 (anticodon wobble position) in tRNAs with GU(N) anticodons (tRNA-Asp, -Asn, -His and -Tyr). Catalysis occurs through a double-displacement mechanism. The nucleophile active site attacks the C1' of nucleotide 34 to detach the guanine base from the RNA, forming a covalent enzyme-RNA intermediate. The proton acceptor active site deprotonates the incoming PreQ1, allowing a nucleophilic attack on the C1' of the ribose to form the product. After dissociation, two additional enzymatic reactions on the tRNA convert PreQ1 to queuine (Q), resulting in the hypermodified nucleoside queuosine (7-(((4,5-cis-dihydroxy-2-cyclopenten-1-yl)amino)methyl)-7-deazaguanosine). The protein is Queuine tRNA-ribosyltransferase of Xanthomonas oryzae pv. oryzae (strain MAFF 311018).